Consider the following 295-residue polypeptide: Inorganic pyrophosphatase 1 (295 aa).

The active-site Nucleophile is the D19. Positions 19 and 21 each coordinate Mg(2+). D21 acts as the Proton donor in catalysis. Positions 30 and 105 each coordinate substrate. A Mg(2+)-binding site is contributed by D190.

The protein belongs to the HAD-like hydrolase superfamily. Tetramer. Mg(2+) serves as cofactor. The cofactor is Fe(2+). Ni(2+) is required as a cofactor. Requires Co(2+) as cofactor. It depends on Mn(2+) as a cofactor.

It catalyses the reaction diphosphate + H2O = 2 phosphate + H(+). Functionally, catalyzes the specific cleavage of pyrophosphate. This Arabidopsis thaliana (Mouse-ear cress) protein is Inorganic pyrophosphatase 1 (PS2).